The sequence spans 413 residues: Mitochondrial inner membrane magnesium transporter MFM1 (413 aa).

The N-terminal 35 residues, 1-35 (MRAFPRVLPFRHQRSYNNILLRTVRLFGSSLSSFD), are a transit peptide targeting the mitochondrion. Residue N202 is glycosylated (N-linked (GlcNAc...) asparagine). The chain crosses the membrane as a helical span at residues 329 to 349 (LMLLGIRYAIGMLSLGGALFL). The short motif at 353–356 (YGMN) is the YGMN element. Residues 367-387 (AYLTVTILGLISTVWLYAKGI) traverse the membrane as a helical segment.

The protein belongs to the CorA metal ion transporter (MIT) (TC 1.A.35) family. In terms of assembly, forms homooligomers. Interacts with MRS2. In terms of processing, N-glycosylated. Glycosylation is important for correct localization of the protein.

The protein localises to the mitochondrion inner membrane. Its function is as follows. Mitochondrial inner membrane magnesium transporter required for mitochondrial magnesium homeostasis. Modulates the conductance of the MRS2 channel. Involved in the splicing of mRNA group II introns in mitochondria by affecting mitochondrial magnesium concentrations, which are critical for group II intron splicing. This chain is Mitochondrial inner membrane magnesium transporter MFM1 (MFM1), found in Saccharomyces cerevisiae (strain ATCC 204508 / S288c) (Baker's yeast).